The primary structure comprises 624 residues: Cell pattern formation-associated protein ust1 (624 aa).

2 disordered regions span residues 1–24 and 43–99; these read MSTASPLHHGHGNGSYANSPAPTG and RSGS…GHSS. Over residues 43–62 the composition is skewed to low complexity; that stretch reads RSGSVPASASGSAPGSASGS. Positions 70–85 are enriched in basic residues; sequence QHHTGHHHYSAHHTHS. Residues 233-339 form the HTH APSES-type domain; the sequence is RVTTTLWEDE…PNIQSFLYHP (107 aa). A DNA-binding region (H-T-H motif) is located at residues 267-288; it reads GTKLLNVCGMSRGKRDGILKNE. Residues 352–362 are compositionally biased toward low complexity; it reads AQERQAQRQRA. Disordered regions lie at residues 352–456, 474–504, and 538–624; these read AQER…QQQQ, QQAYPMTAAQQLARPSVGDRRQSAPISLNNS, and SWND…IHHE. Over residues 369-391 the composition is skewed to polar residues; that stretch reads PGANGTSQAPPLMRANTTPSNGD. Residues 392-426 show a composition bias toward low complexity; sequence TSTFSSGLSSLGSWTGSHDQGHASAPTTAQPSPSS. Residues 427–451 are compositionally biased toward polar residues; the sequence is MHNGATQMHMSLSNHGTASPTYAQS. The segment covering 571–587 has biased composition (basic and acidic residues); that stretch reads LDGDDLHSPDSSDDRLA. Positions 615–624 are enriched in gly residues; the sequence is VGNGSGIHHE.

Belongs to the EFG1/PHD1/stuA family. In terms of processing, phosphorylated but is not a target of cAMP signaling.

It is found in the nucleus. In terms of biological role, transcription factor that regulates asexual reproduction. Binds the StuA-response elements (StRE) with the consensus sequence 5'-(A/T)CGCG(T/A)N(A/C)-3' at the promoters of target genes. Regulates dimorphism, virulence, and the sporulation program. Required for mating, gall induction, and sporogenesis in maize tissue. Regulates expression of the filament-down-regulated gene UM00205 and the teliospore-specific gene ssp1. This chain is Cell pattern formation-associated protein ust1 (ust1), found in Mycosarcoma maydis (Corn smut fungus).